A 497-amino-acid polypeptide reads, in one-letter code: Serine hydroxymethyltransferase (497 aa).

Residues Leu-176 and 180–182 (GHL) each bind (6S)-5,6,7,8-tetrahydrofolate. The residue at position 289 (Lys-289) is an N6-(pyridoxal phosphate)lysine.

Belongs to the SHMT family. As to quaternary structure, homodimer. Pyridoxal 5'-phosphate is required as a cofactor.

Its subcellular location is the cytoplasm. The catalysed reaction is (6R)-5,10-methylene-5,6,7,8-tetrahydrofolate + glycine + H2O = (6S)-5,6,7,8-tetrahydrofolate + L-serine. Its pathway is one-carbon metabolism; tetrahydrofolate interconversion. It participates in amino-acid biosynthesis; glycine biosynthesis; glycine from L-serine: step 1/1. In terms of biological role, catalyzes the reversible interconversion of serine and glycine with tetrahydrofolate (THF) serving as the one-carbon carrier. This reaction serves as the major source of one-carbon groups required for the biosynthesis of purines, thymidylate, methionine, and other important biomolecules. Also exhibits THF-independent aldolase activity toward beta-hydroxyamino acids, producing glycine and aldehydes, via a retro-aldol mechanism. This is Serine hydroxymethyltransferase from Chlamydia trachomatis serovar L2b (strain UCH-1/proctitis).